Consider the following 363-residue polypeptide: Chorismate synthase (363 aa).

Positions 48 and 54 each coordinate NADP(+). FMN is bound by residues 125-127 (RSS), 237-238 (NA), Gly277, 292-296 (KPTSS), and Arg318.

This sequence belongs to the chorismate synthase family. As to quaternary structure, homotetramer. FMNH2 serves as cofactor.

The enzyme catalyses 5-O-(1-carboxyvinyl)-3-phosphoshikimate = chorismate + phosphate. The protein operates within metabolic intermediate biosynthesis; chorismate biosynthesis; chorismate from D-erythrose 4-phosphate and phosphoenolpyruvate: step 7/7. Functionally, catalyzes the anti-1,4-elimination of the C-3 phosphate and the C-6 proR hydrogen from 5-enolpyruvylshikimate-3-phosphate (EPSP) to yield chorismate, which is the branch point compound that serves as the starting substrate for the three terminal pathways of aromatic amino acid biosynthesis. This reaction introduces a second double bond into the aromatic ring system. This Pseudomonas putida (strain ATCC 700007 / DSM 6899 / JCM 31910 / BCRC 17059 / LMG 24140 / F1) protein is Chorismate synthase.